Reading from the N-terminus, the 1247-residue chain is ABC transporter B family member 14 (1247 aa).

The region spanning 48 to 337 (MFLGGLGTCI…AVPSLSAISK (290 aa)) is the ABC transmembrane type-1 1 domain. The next 6 membrane-spanning stretches (helical) occupy residues 49-69 (FLGG…FVFF), 95-115 (LYLV…VACW), 172-192 (HVLR…LSVW), 196-216 (LLTL…AIVM), 277-297 (LGVG…FWYA), and 315-335 (ILNV…LSAI). N-linked (GlcNAc...) asparagine glycosylation is found at N362 and N392. Residues 373-608 (IEFCGVSFAY…GGDYATLVNC (236 aa)) enclose the ABC transporter 1 domain. 407-414 (GPSGSGKS) is an ATP binding site. Residues 679–971 (EWLYALLGSI…TLALTPDIVK (293 aa)) enclose the ABC transmembrane type-1 2 domain. 2 helical membrane passes run 680 to 700 (WLYA…PALF) and 727 to 747 (AIIF…QHYF). Residue N780 is glycosylated (N-linked (GlcNAc...) asparagine). 3 helical membrane-spanning segments follow: residues 807–824 (IVQN…AFFY), 830–850 (AVVT…QLFL), and 915–935 (LSQC…SVLI). N938 carries N-linked (GlcNAc...) asparagine glycosylation. A helical transmembrane segment spans residues 949 to 969 (FMVLLVTAYSVAETLALTPDI). In terms of domain architecture, ABC transporter 2 spans 1006-1242 (IEFRNVSFAY…SDGFYKKLTS (237 aa)). N1010 carries N-linked (GlcNAc...) asparagine glycosylation. 1041–1048 (GPSGSGKS) lines the ATP pocket. N-linked (GlcNAc...) asparagine glycosylation is present at N1108.

It belongs to the ABC transporter superfamily. ABCB family. Multidrug resistance exporter (TC 3.A.1.201) subfamily.

It localises to the membrane. The polypeptide is ABC transporter B family member 14 (ABCB14) (Arabidopsis thaliana (Mouse-ear cress)).